Consider the following 337-residue polypeptide: Ornithine carbamoyltransferase, catabolic (337 aa).

Carbamoyl phosphate contacts are provided by residues Ser58–Thr61, Gln85, Arg109, and His135–Gln138. Residues Asn167, Asp231, and Ser235–Met236 contribute to the L-ornithine site. Carbamoyl phosphate-binding positions include Cys272–Leu273 and Arg317.

This sequence belongs to the aspartate/ornithine carbamoyltransferase superfamily. OTCase family.

The protein resides in the cytoplasm. The enzyme catalyses carbamoyl phosphate + L-ornithine = L-citrulline + phosphate + H(+). It participates in amino-acid degradation; L-arginine degradation via ADI pathway; carbamoyl phosphate from L-arginine: step 2/2. Its function is as follows. Reversibly catalyzes the transfer of the carbamoyl group from carbamoyl phosphate (CP) to the N(epsilon) atom of ornithine (ORN) to produce L-citrulline. The sequence is that of Ornithine carbamoyltransferase, catabolic (arcB) from Latilactobacillus sakei (Lactobacillus sakei).